The chain runs to 286 residues: General stress protein 39 (286 aa).

Residues 1 to 26 (MANYPKELPAQTQSRQPGIESEMNPS) are disordered. 46–70 (LITGGDSGIGRAVSVAYAKEGADIA) contributes to the NAD(+) binding site. Residue serine 178 coordinates substrate. Tyrosine 191 functions as the Proton acceptor in the catalytic mechanism.

This sequence belongs to the short-chain dehydrogenases/reductases (SDR) family.

The protein is General stress protein 39 (ydaD) of Bacillus subtilis (strain 168).